The primary structure comprises 197 residues: Pyridoxal 5'-phosphate synthase subunit PdxT (197 aa).

An L-glutamine-binding site is contributed by 53 to 55; the sequence is GES. Cys-85 (nucleophile) is an active-site residue. L-glutamine contacts are provided by residues Arg-114 and 142-143; that span reads IR. Catalysis depends on charge relay system residues His-179 and Glu-181.

The protein belongs to the glutaminase PdxT/SNO family. In the presence of PdxS, forms a dodecamer of heterodimers. Only shows activity in the heterodimer.

The catalysed reaction is aldehydo-D-ribose 5-phosphate + D-glyceraldehyde 3-phosphate + L-glutamine = pyridoxal 5'-phosphate + L-glutamate + phosphate + 3 H2O + H(+). It catalyses the reaction L-glutamine + H2O = L-glutamate + NH4(+). The protein operates within cofactor biosynthesis; pyridoxal 5'-phosphate biosynthesis. In terms of biological role, catalyzes the hydrolysis of glutamine to glutamate and ammonia as part of the biosynthesis of pyridoxal 5'-phosphate. The resulting ammonia molecule is channeled to the active site of PdxS. In Thermococcus kodakarensis (strain ATCC BAA-918 / JCM 12380 / KOD1) (Pyrococcus kodakaraensis (strain KOD1)), this protein is Pyridoxal 5'-phosphate synthase subunit PdxT.